A 158-amino-acid polypeptide reads, in one-letter code: Acetolactate synthase small subunit (158 aa).

Positions 4-78 (ILSVLLENES…DVLRVIKVGQ (75 aa)) constitute an ACT domain.

Belongs to the acetolactate synthase small subunit family. Dimer of large and small chains.

It carries out the reaction 2 pyruvate + H(+) = (2S)-2-acetolactate + CO2. The protein operates within amino-acid biosynthesis; L-isoleucine biosynthesis; L-isoleucine from 2-oxobutanoate: step 1/4. It functions in the pathway amino-acid biosynthesis; L-valine biosynthesis; L-valine from pyruvate: step 1/4. This chain is Acetolactate synthase small subunit (ilvH), found in Buchnera aphidicola subsp. Schizaphis graminum (strain Sg).